The primary structure comprises 320 residues: Cell-cell adhesion glycoprotein 64 (320 aa).

The signal sequence occupies residues 1–19 (MNKFITLFVLLASVSVAMS). Intrachain disulfides connect C39/C57, C67/C79, C73/C86, C98/C110, C104/C115, C123/C138, C132/C147, C157/C171, and C165/C176. N-linked (GlcNAc...) asparagine glycosylation is present at N49. N-linked (GlcNAc...) asparagine glycosylation occurs at N80. 2 N-linked (GlcNAc...) asparagine glycosylation sites follow: N141 and N158. Residue N187 is glycosylated (N-linked (GlcNAc...) asparagine). 2 disulfide bridges follow: C188-C202 and C194-C207. N-linked (GlcNAc...) asparagine glycosylation occurs at N216. Disulfide bonds link C226-C246, C232-C234, C266-C285, and C270-C281. S298 is lipidated: GPI-like-anchor amidated serine. Residues 299 to 320 (SATTIAFNAFVVFAIVLSVLLF) constitute a propeptide, removed in mature form.

Post-translationally, contains 18 disulfide bonds. In terms of processing, the GPI-like-anchor contains a phosphoceramide group, rather than a phosphatidyl group.

Its subcellular location is the cell membrane. Cell-cell adhesion during development. This is Cell-cell adhesion glycoprotein 64 from Heterostelium pallidum (Cellular slime mold).